The following is a 128-amino-acid chain: Large ribosomal subunit protein bL19 (128 aa).

This sequence belongs to the bacterial ribosomal protein bL19 family.

Functionally, this protein is located at the 30S-50S ribosomal subunit interface and may play a role in the structure and function of the aminoacyl-tRNA binding site. The polypeptide is Large ribosomal subunit protein bL19 (Ralstonia nicotianae (strain ATCC BAA-1114 / GMI1000) (Ralstonia solanacearum)).